We begin with the raw amino-acid sequence, 163 residues long: Crossover junction endodeoxyribonuclease RuvC (163 aa).

Residues D9, E76, and D148 contribute to the active site. Mg(2+) contacts are provided by D9, E76, and D148.

This sequence belongs to the RuvC family. Homodimer which binds Holliday junction (HJ) DNA. The HJ becomes 2-fold symmetrical on binding to RuvC with unstacked arms; it has a different conformation from HJ DNA in complex with RuvA. In the full resolvosome a probable DNA-RuvA(4)-RuvB(12)-RuvC(2) complex forms which resolves the HJ. The cofactor is Mg(2+).

The protein resides in the cytoplasm. The enzyme catalyses Endonucleolytic cleavage at a junction such as a reciprocal single-stranded crossover between two homologous DNA duplexes (Holliday junction).. Its function is as follows. The RuvA-RuvB-RuvC complex processes Holliday junction (HJ) DNA during genetic recombination and DNA repair. Endonuclease that resolves HJ intermediates. Cleaves cruciform DNA by making single-stranded nicks across the HJ at symmetrical positions within the homologous arms, yielding a 5'-phosphate and a 3'-hydroxyl group; requires a central core of homology in the junction. The consensus cleavage sequence is 5'-(A/T)TT(C/G)-3'. Cleavage occurs on the 3'-side of the TT dinucleotide at the point of strand exchange. HJ branch migration catalyzed by RuvA-RuvB allows RuvC to scan DNA until it finds its consensus sequence, where it cleaves and resolves the cruciform DNA. The protein is Crossover junction endodeoxyribonuclease RuvC of Nostoc punctiforme (strain ATCC 29133 / PCC 73102).